The sequence spans 396 residues: Tail sheath protein (396 aa).

It belongs to the myoviridae tail sheath protein family. Homomultimer.

Its subcellular location is the virion. The protein localises to the host cytoplasm. Its function is as follows. Polymerizes as an extended helical structure around the baseplate-tail tube complex. During ejection, the sheath shifts to a contracted form, thereby making the inner tail tube protrude through the host cell envelope. In Enterobacteriaceae (Bacteriophage P2), this protein is Tail sheath protein (FI).